The primary structure comprises 37 residues: Potassium channel toxin alpha-KTx 15.1 (37 aa).

Position 1 is a pyrrolidone carboxylic acid (Gln-1). 3 disulfides stabilise this stretch: Cys-8/Cys-28, Cys-13/Cys-33, and Cys-17/Cys-35.

Belongs to the short scorpion toxin superfamily. Potassium channel inhibitor family. Alpha-KTx 15 subfamily. Expressed by the venom gland.

Its subcellular location is the secreted. Functionally, blocker of voltage-gated potassium channels (600 nM of the toxin induces a block of 25% of hERG currents). May also inhibit Kv4/KCND when coexpressed with DPP6 or DPP10. In adult rat brain, it blocks the transient potassium channels in cerebellum granular cells. Blocks potassium channels by a simple 'plugging mechanism', in which a single toxin molecule finds a specific receptor site in the external vestibule of the potassium channel and thereby occludes the outer entry to the potassium conducting pore. The protein is Potassium channel toxin alpha-KTx 15.1 of Androctonus australis (Sahara scorpion).